A 106-amino-acid polypeptide reads, in one-letter code: Large ribosomal subunit protein eL42 (106 aa).

The interval 37 to 56 (SQGKRRYDRKQSGYGGQTKP) is disordered.

It belongs to the eukaryotic ribosomal protein eL42 family.

The protein is Large ribosomal subunit protein eL42 (RPL44) of Pichia kudriavzevii (Yeast).